Here is a 183-residue protein sequence, read N- to C-terminus: MIKVVKGDITKFRAEAIVNAANKYLEHGGGVAYAIAKAAAGDVREYIRISKEAMREQLGKDWIDHGEVVVTPPLQLEKNGVKYVIHTVGPYCGGSWDEDKKSKLKLAILGALKKADELGVKSIAFPAISAGIYGCPLEKVVETFVEVVKEFLPSAKSLREVFLVLYSQEDYEKALKIVGQGGV.

In terms of domain architecture, Macro spans 1–182 (MIKVVKGDIT…KALKIVGQGG (182 aa)).

This is an uncharacterized protein from Pyrococcus furiosus (strain ATCC 43587 / DSM 3638 / JCM 8422 / Vc1).